The sequence spans 695 residues: Centrosomal protein of 89 kDa (695 aa).

Disordered regions lie at residues 24 to 54 (LIPAATIAPRPAVPRTPPPRSPNPSPERPRS), 66 to 147 (TGRT…GDED), and 167 to 272 (AVPL…SEVL). Over residues 34 to 49 (PAVPRTPPPRSPNPSP) the composition is skewed to pro residues. 2 stretches are compositionally biased toward acidic residues: residues 124 to 146 (DEDDDEDDEGNDIDELEGLEGDE) and 178 to 189 (DSDVDEETEDSA). The span at 209–226 (GQTQPSSLPQPRSVSRRS) shows a compositional bias: polar residues. Basic and acidic residues predominate over residues 251-271 (TNKESPVRVNERDRSSEDSEV). 2 coiled-coil regions span residues 276–368 (LEVQ…RYQA) and 406–632 (AYED…LEKE).

The protein resides in the cytoplasm. The protein localises to the cytosol. Its subcellular location is the cytoskeleton. It is found in the microtubule organizing center. It localises to the centrosome. The protein resides in the spindle pole. The protein localises to the centriole. Its subcellular location is the mitochondrion intermembrane space. Required for ciliogenesis. Also plays a role in mitochondrial metabolism where it may modulate complex IV activity. In Danio rerio (Zebrafish), this protein is Centrosomal protein of 89 kDa (cep89).